Reading from the N-terminus, the 105-residue chain is Large ribosomal subunit protein uL24 (105 aa).

It belongs to the universal ribosomal protein uL24 family. Part of the 50S ribosomal subunit.

One of two assembly initiator proteins, it binds directly to the 5'-end of the 23S rRNA, where it nucleates assembly of the 50S subunit. Its function is as follows. One of the proteins that surrounds the polypeptide exit tunnel on the outside of the subunit. The polypeptide is Large ribosomal subunit protein uL24 (Azoarcus sp. (strain BH72)).